Consider the following 640-residue polypeptide: Pro-neuregulin-1, membrane-bound isoform (640 aa).

Residues 1–19 (MSERKEGRGKGKGKKKERG) constitute a propeptide that is removed on maturation. Residues 1 to 53 (MSERKEGRGKGKGKKKERGSGKKPESAAGSQSPALPPRLKEMKSQESAAGSKL) are disordered. The Extracellular segment spans residues 20-242 (SGKKPESAAG…EKAEELYQKR (223 aa)). One can recognise an Ig-like C2-type domain in the interval 37–128 (PRLKEMKSQE…GNDSASANIT (92 aa)). Residues Cys-57 and Cys-112 are joined by a disulfide bond. Asn-120, Asn-126, and Asn-164 each carry an N-linked (GlcNAc...) asparagine glycan. The EGF-like domain occupies 178–222 (HLVKCAEKEKTFCVNGGECFMVKDLSNPSRYLCKCQPGFTGARCT). Disulfide bonds link Cys-182/Cys-196, Cys-190/Cys-210, and Cys-212/Cys-221. A helical membrane pass occupies residues 243-265 (VLTITGICIALLVVGIMCVVAYC). Residues 266–640 (KTKKQRKKLH…VIANQDPIAV (375 aa)) lie on the Cytoplasmic side of the membrane. The span at 334 to 350 (TSHYTSTAHHSTTVTQT) shows a compositional bias: low complexity. Disordered stretches follow at residues 334-360 (TSHY…NGHT), 375-399 (SVEN…GGPR), 433-461 (RMSP…SMTV), and 524-588 (EYET…DTPF). A compositionally biased stretch (polar residues) spans 351-360 (PSHSWSNGHT). Gly residues predominate over residues 387-397 (GPRGRLNGTGG). Basic residues predominate over residues 542 to 552 (ANSRRAKRTKP). A compositionally biased stretch (low complexity) spans 563–574 (DSNTSSQSSNSE).

The protein belongs to the neuregulin family. As to quaternary structure, the cytoplasmic domain interacts with the LIM domain region of LIMK1. Forms a ternary complex with ERBB3 and ITGAV:ITGB3 or ITGA6:ITGB4. Interacts with NRDC and BACE1. Post-translationally, proteolytic cleavage close to the plasma membrane on the external face leads to the release of the soluble growth factor form. N- and O-glycosylated. Extensive glycosylation precedes the proteolytic cleavage. As to expression, type I isoforms are the predominant forms expressed in the endocardium. Isoform alpha is expressed in breast, ovary, testis, prostate, heart, skeletal muscle, lung, placenta liver, kidney, salivary gland, small intestine and brain, but not in uterus, stomach, pancreas, and spleen. Isoform 3 is the predominant form in mesenchymal cells and in non-neuronal organs, whereas isoform 6 is the major neuronal form. Isoform 8 is expressed in spinal cord and brain. Isoform 9 is the major form in skeletal muscle cells; in the nervous system it is expressed in spinal cord and brain. Also detected in adult heart, placenta, lung, liver, kidney, and pancreas. Isoform 10 is expressed in nervous system: spinal cord motor neurons, dorsal root ganglion neurons, and brain. Predominant isoform expressed in sensory and motor neurons. Not detected in adult heart, placenta, lung, liver, skeletal muscle, kidney, and pancreas. Not expressed in fetal lung, liver and kidney. Type IV isoforms are brain-specific.

The protein localises to the cell membrane. It localises to the secreted. Its subcellular location is the nucleus. The protein resides in the membrane. Functionally, direct ligand for ERBB3 and ERBB4 tyrosine kinase receptors. Concomitantly recruits ERBB1 and ERBB2 coreceptors, resulting in ligand-stimulated tyrosine phosphorylation and activation of the ERBB receptors. The multiple isoforms perform diverse functions such as inducing growth and differentiation of epithelial, glial, neuronal, and skeletal muscle cells; inducing expression of acetylcholine receptor in synaptic vesicles during the formation of the neuromuscular junction; stimulating lobuloalveolar budding and milk production in the mammary gland and inducing differentiation of mammary tumor cells; stimulating Schwann cell proliferation; implication in the development of the myocardium such as trabeculation of the developing heart. Isoform 10 may play a role in motor and sensory neuron development. Binds to ERBB4. Binds to ERBB3. Acts as a ligand for integrins and binds (via EGF domain) to integrins ITGAV:ITGB3 or ITGA6:ITGB4. Its binding to integrins and subsequent ternary complex formation with integrins and ERRB3 are essential for NRG1-ERBB signaling. Induces the phosphorylation and activation of MAPK3/ERK1, MAPK1/ERK2 and AKT1. Ligand-dependent ERBB4 endocytosis is essential for the NRG1-mediated activation of these kinases in neurons. The sequence is that of Pro-neuregulin-1, membrane-bound isoform (NRG1) from Homo sapiens (Human).